The primary structure comprises 305 residues: Heme A synthase (305 aa).

Over 1-6 (MKKFLK) the chain is Cytoplasmic. Residues 7-27 (VWSVLTIICMTVVVFGGALVT) form a helical membrane-spanning segment. Residues 28-63 (KTGSADGCGNSWPLCNGQLVRLTDVTPEKLIEFMHR) lie on the Extracellular side of the membrane. An intrachain disulfide couples C35 to C42. E59 is a catalytic residue. H62 is a binding site for heme o. A helical membrane pass occupies residues 64–84 (MTTGISSIFVIVLAICAWIYM). The Cytoplasmic portion of the chain corresponds to 85–92 (KNRRETKP). The chain crosses the membrane as a helical span at residues 93–113 (LAIIAVLFLIIQALMGMAAVV). At 114 to 122 (WGQNPYIMA) the chain is on the extracellular side. The helical transmembrane segment at 123–143 (LHFGISIICYASIVLLALMIF) threads the bilayer. H124 serves as a coordination point for heme o. Residues 144-160 (EVDRKFDARNLVMGTKL) are Cytoplasmic-facing. The chain crosses the membrane as a helical span at residues 161–181 (RINIYALTIYTYLAVYTGALV). The Extracellular segment spans residues 182-212 (RHEKASMAVPVWPFENGKFIMPDSVQDYVQY). The chain crosses the membrane as a helical span at residues 213–233 (FHRVAAFILIVWLLYVTWLVF). Position 214 (H214) interacts with heme b. Over 234-240 (RDYRRYR) the chain is Cytoplasmic. A helical transmembrane segment spans residues 241 to 261 (VLTFSMVLSLLFIALQAVTGA). The Extracellular segment spans residues 262–271 (LSVYTGVNLY). The chain crosses the membrane as a helical span at residues 272 to 292 (IALAHSLIITMLFALLCYLCL). H276 serves as a coordination point for heme b. Topologically, residues 293 to 305 (LASRSKSNRLRIK) are cytoplasmic.

This sequence belongs to the COX15/CtaA family. Type 1 subfamily. As to quaternary structure, interacts with CtaB. It depends on heme b as a cofactor.

The protein localises to the cell membrane. The enzyme catalyses Fe(II)-heme o + 2 A + H2O = Fe(II)-heme a + 2 AH2. Its pathway is porphyrin-containing compound metabolism; heme A biosynthesis; heme A from heme O: step 1/1. Functionally, catalyzes the conversion of heme O to heme A by two successive hydroxylations of the methyl group at C8. The first hydroxylation forms heme I, the second hydroxylation results in an unstable dihydroxymethyl group, which spontaneously dehydrates, resulting in the formyl group of heme A. The chain is Heme A synthase from Listeria welshimeri serovar 6b (strain ATCC 35897 / DSM 20650 / CCUG 15529 / CIP 8149 / NCTC 11857 / SLCC 5334 / V8).